Consider the following 478-residue polypeptide: CDK5 and ABL1 enzyme substrate 2 (478 aa).

The interval 1 to 121 (MAAAAAGGAP…GLGLDGQRQR (121 aa)) is disordered. Positions 11-24 (GPAPGPAGPPPPAA) are enriched in pro residues. Over residues 25–35 (PTSAARAPPQA) the composition is skewed to low complexity. Basic residues predominate over residues 36-46 (LRRRGDSRRRQ). The segment covering 69 to 92 (EKPPPPPAEAREPPAPPPPEPPTG) has biased composition (pro residues). Residues S130 and S208 each carry the phosphoserine modification. Positions 257–296 (SDSHGLLPTPRPSVPRTLPGSRHKPAPTKSAPASTELGSD) are disordered.

Belongs to the cyclin family. As to quaternary structure, binds to CDK3, CDK5 and ABL1. The C-terminal cyclin-box-like region binds to CDK5.

Unknown. Probably involved in G1-S cell cycle transition. This Homo sapiens (Human) protein is CDK5 and ABL1 enzyme substrate 2 (CABLES2).